Reading from the N-terminus, the 491-residue chain is Trigger factor (491 aa).

A PPIase FKBP-type domain is found at 169 to 254 (GDRVTIDYLG…VKDVAAAAPI (86 aa)). Residues 434–491 (KVSKEELTAEDDADEKPAKKTASKKKAAAKADAAEGEEAAAPKRKAPAKKKASDESAE) form a disordered region. The segment covering 452 to 461 (KKTASKKKAA) has biased composition (basic residues).

It belongs to the FKBP-type PPIase family. Tig subfamily.

It is found in the cytoplasm. The catalysed reaction is [protein]-peptidylproline (omega=180) = [protein]-peptidylproline (omega=0). Functionally, involved in protein export. Acts as a chaperone by maintaining the newly synthesized protein in an open conformation. Functions as a peptidyl-prolyl cis-trans isomerase. This is Trigger factor from Sinorhizobium medicae (strain WSM419) (Ensifer medicae).